A 114-amino-acid polypeptide reads, in one-letter code: Large ribosomal subunit protein bL20 (114 aa).

The protein belongs to the bacterial ribosomal protein bL20 family.

Binds directly to 23S ribosomal RNA and is necessary for the in vitro assembly process of the 50S ribosomal subunit. It is not involved in the protein synthesizing functions of that subunit. This chain is Large ribosomal subunit protein bL20, found in Anaeromyxobacter dehalogenans (strain 2CP-1 / ATCC BAA-258).